Here is a 251-residue protein sequence, read N- to C-terminus: RING-H2 finger protein ATL10 (251 aa).

Residues 59–79 (MMLLSILICGIICCLGLHYII) traverse the membrane as a helical segment. An RING-type; atypical zinc finger spans residues 135–177 (CVICLSDFVSGEQLRLLPKCNHGFHVRCIDKWLQQHLTCPKCR).

This sequence belongs to the RING-type zinc finger family. ATL subfamily.

It localises to the membrane. It carries out the reaction S-ubiquitinyl-[E2 ubiquitin-conjugating enzyme]-L-cysteine + [acceptor protein]-L-lysine = [E2 ubiquitin-conjugating enzyme]-L-cysteine + N(6)-ubiquitinyl-[acceptor protein]-L-lysine.. Its pathway is protein modification; protein ubiquitination. This is RING-H2 finger protein ATL10 (ATL10) from Arabidopsis thaliana (Mouse-ear cress).